Here is a 409-residue protein sequence, read N- to C-terminus: Putative lipoate-protein ligase A (409 aa).

Residues 146 to 330 (GPDNCRLLFY…RFQKTFKVDG (185 aa)) enclose the BPL/LPL catalytic domain. ATP is bound by residues R188, 193-196 (GTVL), and K249. K249 is a binding site for (R)-lipoate.

It belongs to the LplA family. In terms of assembly, monomer.

It carries out the reaction L-lysyl-[lipoyl-carrier protein] + (R)-lipoate + ATP = N(6)-[(R)-lipoyl]-L-lysyl-[lipoyl-carrier protein] + AMP + diphosphate + H(+). Its pathway is protein modification; protein lipoylation via exogenous pathway; protein N(6)-(lipoyl)lysine from lipoate: step 1/2. It participates in protein modification; protein lipoylation via exogenous pathway; protein N(6)-(lipoyl)lysine from lipoate: step 2/2. Its function is as follows. Catalyzes both the ATP-dependent activation of exogenously supplied lipoate to lipoyl-AMP and the transfer of the activated lipoyl onto the lipoyl domains of lipoate-dependent enzymes. This chain is Putative lipoate-protein ligase A (AIM22), found in Saccharomyces cerevisiae (strain RM11-1a) (Baker's yeast).